The chain runs to 217 residues: ITG-like peptide (217 aa).

The signal sequence occupies residues 1 to 21 (MHRTMAVTAVLVLSAAGAAHA). A propeptide spanning residues 22–208 (WGGLFNRFSS…REFVQHTAGE (187 aa)) is cleaved from the precursor.

As to expression, ITG-like peptide: Expressed in corpora cardiaca (CC), corpora allata (CA), antennal lobe (AL) and gnathal ganglion (GNG) (at protein level). Expression in AL detected in all animals, expression in GNG detected in most animals and in CA and CC detected in few animals (at protein level).

The protein localises to the secreted. This Agrotis ipsilon (Black cutworm moth) protein is ITG-like peptide.